The following is a 181-amino-acid chain: Oligoribonuclease (181 aa).

Positions 8-171 constitute an Exonuclease domain; sequence LIWIDLEMTG…DDIRESVAEL (164 aa). Y129 is an active-site residue.

Belongs to the oligoribonuclease family.

It localises to the cytoplasm. Functionally, 3'-to-5' exoribonuclease specific for small oligoribonucleotides. The protein is Oligoribonuclease of Sodalis glossinidius (strain morsitans).